Consider the following 239-residue polypeptide: Superoxide dismutase [Mn] 3 (239 aa).

Residues 1-19 (ASTQQTPAQSPTASPTVST) are compositionally biased toward polar residues. Residues 1–20 (ASTQQTPAQSPTASPTVSTP) form a disordered region. The first 30 residues, 1 to 30 (ASTQQTPAQSPTASPTVSTPVAYVDRPLTA), serve as a signal peptide directing secretion. Residues histidine 57, histidine 112, aspartate 195, and histidine 199 each contribute to the Mn(2+) site.

Belongs to the iron/manganese superoxide dismutase family. As to quaternary structure, homodimer. It depends on Mn(2+) as a cofactor.

The enzyme catalyses 2 superoxide + 2 H(+) = H2O2 + O2. Functionally, destroys superoxide anion radicals which are normally produced within the cells and which are toxic to biological systems. In Leptolyngbya boryana (Plectonema boryanum), this protein is Superoxide dismutase [Mn] 3 (sodA3).